The following is a 470-amino-acid chain: Uronate isomerase (470 aa).

The protein belongs to the metallo-dependent hydrolases superfamily. Uronate isomerase family.

It catalyses the reaction D-glucuronate = D-fructuronate. It carries out the reaction aldehydo-D-galacturonate = keto-D-tagaturonate. It participates in carbohydrate metabolism; pentose and glucuronate interconversion. This is Uronate isomerase from Salmonella typhi.